The primary structure comprises 394 residues: Elongation factor Tu (394 aa).

The region spanning 10–204 (KPHVNVGTIG…ALDTYIPEPE (195 aa)) is the tr-type G domain. The interval 19-26 (GHVDHGKT) is G1. 19 to 26 (GHVDHGKT) is a GTP binding site. Position 26 (T26) interacts with Mg(2+). A G2 region spans residues 60–64 (GITIN). A G3 region spans residues 81 to 84 (DCPG). GTP contacts are provided by residues 81 to 85 (DCPGH) and 136 to 139 (NKCD). The interval 136–139 (NKCD) is G4. Positions 174–176 (SAL) are G5.

It belongs to the TRAFAC class translation factor GTPase superfamily. Classic translation factor GTPase family. EF-Tu/EF-1A subfamily. As to quaternary structure, monomer.

It is found in the cytoplasm. The catalysed reaction is GTP + H2O = GDP + phosphate + H(+). In terms of biological role, GTP hydrolase that promotes the GTP-dependent binding of aminoacyl-tRNA to the A-site of ribosomes during protein biosynthesis. This chain is Elongation factor Tu, found in Shewanella halifaxensis (strain HAW-EB4).